A 523-amino-acid chain; its full sequence is MSFDINWEKLTTDNQINDSIKNFLHEQFQSLQLPSYISNLEVVDFKLGTIPPEITIRHIGDPFEEFYANPDDGDGDGNNDEEVLKDKSTKLKNRQAVNIIPNKAGATHEADIINDHDYGDEDDIDDDYDNDSDDYDDDENDGLHDHGEDEENEESSQYDEDRLSNITEGLSLVELLASASTPKRTSPQRPPLISPRGEVTQQTLSKPKEPFQSILNPYGVTSVLNQGSNAAKNTTATSIAAGTTAANGVGTLKDIFDQNNFSSRVIPKIKTKEESVSGDQQQGKQTGKANEKGQKHKHEHEEEQGSDKQNAKNKASDDVQLILEINYKGNLYIDLLVTLLVNYPSPNFISLPIKLHVTDLVIHTIATIAYLKHAVYVSFLCDVNDEADGFSGASSNASTPNVTGTTSGGGNSGGNIVDYYFSDPNNKERIDIIKKIKIESEIGEVENNILRNVGKVEKFLMEQLRAILRDEIAWPSWICVDMAENDDEEEDDDDDDHDEDNEGRGRMRDTGDVDVRDHDKKED.

The region spanning 1–483 (MSFDINWEKL…WPSWICVDMA (483 aa)) is the SMP-LTD domain. Over residues 108 to 117 (HEADIINDHD) the composition is skewed to basic and acidic residues. Disordered stretches follow at residues 108–160 (HEAD…QYDE), 178–213 (SAST…PFQS), 270–313 (KTKE…NAKN), and 483–523 (AEND…KKED). Acidic residues-rich tracts occupy residues 118-140 (YGDE…DDEN) and 148-158 (EDEENEESSQY). Polar residues-rich tracts occupy residues 178–187 (SASTPKRTSP) and 277–288 (SGDQQQGKQTGK). The segment covering 289–313 (ANEKGQKHKHEHEEEQGSDKQNAKN) has biased composition (basic and acidic residues). Positions 483 to 501 (AENDDEEEDDDDDDHDEDN) are enriched in acidic residues. Over residues 502 to 523 (EGRGRMRDTGDVDVRDHDKKED) the composition is skewed to basic and acidic residues.

Belongs to the MDM12 family. As to quaternary structure, component of the ER-mitochondria encounter structure (ERMES) or MDM complex, composed of MMM1, MDM10, MDM12 and MDM34. An MMM1 homodimer associates with one molecule of MDM12 on each side in a pairwise head-to-tail manner, and the SMP-LTD domains of MMM1 and MDM12 generate a continuous hydrophobic tunnel for phospholipid trafficking.

It localises to the mitochondrion outer membrane. It is found in the endoplasmic reticulum membrane. In terms of biological role, component of the ERMES/MDM complex, which serves as a molecular tether to connect the endoplasmic reticulum (ER) and mitochondria. Components of this complex are involved in the control of mitochondrial shape and protein biogenesis, and function in nonvesicular lipid trafficking between the ER and mitochondria. MDM12 is required for the interaction of the ER-resident membrane protein MMM1 and the outer mitochondrial membrane-resident beta-barrel protein MDM10. The MDM12-MMM1 subcomplex functions in the major beta-barrel assembly pathway that is responsible for biogenesis of all mitochondrial outer membrane beta-barrel proteins, and acts in a late step after the SAM complex. The MDM10-MDM12-MMM1 subcomplex further acts in the TOM40-specific pathway after the action of the MDM12-MMM1 complex. Essential for establishing and maintaining the structure of mitochondria and maintenance of mtDNA nucleoids. The polypeptide is Mitochondrial distribution and morphology protein 12 (Lodderomyces elongisporus (strain ATCC 11503 / CBS 2605 / JCM 1781 / NBRC 1676 / NRRL YB-4239) (Yeast)).